We begin with the raw amino-acid sequence, 727 residues long: Epithelial splicing regulatory protein 2 (727 aa).

The disordered stretch occupies residues 1 to 22 (MTPPPPPPPPPGPDPAADPAAD). S83 carries the post-translational modification Phosphoserine. RRM domains lie at 257-353 (TVVR…RFLS), 358-438 (VILR…RSTA), and 475-555 (DCVR…PCST). Residue S573 is modified to Phosphoserine.

This sequence belongs to the ESRP family. As to quaternary structure, interacts with RBPMS. Epithelial cell-specific.

It localises to the nucleus. In terms of biological role, mRNA splicing factor that regulates the formation of epithelial cell-specific isoforms. Specifically regulates the expression of FGFR2-IIIb, an epithelial cell-specific isoform of FGFR2. Also regulates the splicing of CD44, CTNND1, ENAH, 3 transcripts that undergo changes in splicing during the epithelial-to-mesenchymal transition (EMT). Acts by directly binding specific sequences in mRNAs. Binds the GU-rich sequence motifs in the ISE/ISS-3, a cis-element regulatory region present in the mRNA of FGFR2. The protein is Epithelial splicing regulatory protein 2 (ESRP2) of Homo sapiens (Human).